Here is a 122-residue protein sequence, read N- to C-terminus: UPF0102 protein Smed_3545 (122 aa).

This sequence belongs to the UPF0102 family.

The sequence is that of UPF0102 protein Smed_3545 from Sinorhizobium medicae (strain WSM419) (Ensifer medicae).